The chain runs to 429 residues: Histidine--tRNA ligase (429 aa).

It belongs to the class-II aminoacyl-tRNA synthetase family. In terms of assembly, homodimer.

It is found in the cytoplasm. The catalysed reaction is tRNA(His) + L-histidine + ATP = L-histidyl-tRNA(His) + AMP + diphosphate + H(+). The sequence is that of Histidine--tRNA ligase from Streptococcus pneumoniae (strain 70585).